The chain runs to 127 residues: Large ribosomal subunit protein bL19 (127 aa).

This sequence belongs to the bacterial ribosomal protein bL19 family.

This protein is located at the 30S-50S ribosomal subunit interface and may play a role in the structure and function of the aminoacyl-tRNA binding site. The chain is Large ribosomal subunit protein bL19 from Roseobacter denitrificans (strain ATCC 33942 / OCh 114) (Erythrobacter sp. (strain OCh 114)).